Here is a 434-residue protein sequence, read N- to C-terminus: ATP-sensitive inward rectifier potassium channel 14 (434 aa).

Over 1–81 (MGLARALRRL…LSDLFTTCVD (81 aa)) the chain is Cytoplasmic. Cys-79 carries the post-translational modification S-nitrosocysteine. Residues 82-108 (VRWRWMCLLFSCSFLASWLLFGLTFWL) traverse the membrane as a helical segment. The Extracellular portion of the chain corresponds to 109–131 (IASLHGDLAAPPPPAPCFSQVAS). The segment at residues 132 to 148 (FLAAFLFALETQTSIGY) is an intramembrane region (helical; Pore-forming). The Selectivity filter signature appears at 145–150 (SIGYGV). The Extracellular portion of the chain corresponds to 149–157 (GVRSVTEEC). Residues 158–185 (PAAVAAVVLQCIAGCVLDAFVVGAVMAK) traverse the membrane as a helical segment. The Cytoplasmic segment spans residues 186-434 (MAKPKKRNET…TPTLALTLPP (249 aa)). Positions 398 to 434 (QEEDEEEDTKEGTSAETPERAASPQALTPTLALTLPP) are disordered. Over residues 407–416 (KEGTSAETPE) the composition is skewed to basic and acidic residues. Over residues 418-434 (AASPQALTPTLALTLPP) the composition is skewed to low complexity.

Belongs to the inward rectifier-type potassium channel (TC 1.A.2.1) family. KCNJ14 subfamily.

The protein resides in the membrane. The enzyme catalyses K(+)(in) = K(+)(out). Channel activity is regulated by variations of cytosolic pH; channels are activated by alkaline and inhibited by acidic pH values. Inhibited by Ba(2+) and Cs(+) in a voltage-dependent manner; sensitivity to those inhibitors is lower than in other Kir channels. In terms of biological role, inward rectifier potassium channels are characterized by a greater tendency to allow potassium to flow into the cell rather than out of it. Their voltage dependence is regulated by the concentration of extracellular potassium; as external potassium is raised, the voltage range of the channel opening shifts to more positive voltages. The sequence is that of ATP-sensitive inward rectifier potassium channel 14 (Kcnj14) from Mus musculus (Mouse).